The following is a 393-amino-acid chain: Formate-dependent phosphoribosylglycinamide formyltransferase (393 aa).

N(1)-(5-phospho-beta-D-ribosyl)glycinamide is bound by residues 22 to 23 (EL) and Glu-82. ATP-binding positions include Arg-114, Lys-155, 160–165 (SSGHGQ), 195–198 (EGFV), and Glu-203. The ATP-grasp domain occupies 119 to 308 (RLAAEELGLP…QFALHARAVL (190 aa)). Residues Glu-267 and Glu-279 each coordinate Mg(2+). Residues Asp-286, Lys-356, and 363–364 (RR) each bind N(1)-(5-phospho-beta-D-ribosyl)glycinamide.

This sequence belongs to the PurK/PurT family. Homodimer.

The catalysed reaction is N(1)-(5-phospho-beta-D-ribosyl)glycinamide + formate + ATP = N(2)-formyl-N(1)-(5-phospho-beta-D-ribosyl)glycinamide + ADP + phosphate + H(+). The protein operates within purine metabolism; IMP biosynthesis via de novo pathway; N(2)-formyl-N(1)-(5-phospho-D-ribosyl)glycinamide from N(1)-(5-phospho-D-ribosyl)glycinamide (formate route): step 1/1. Its function is as follows. Involved in the de novo purine biosynthesis. Catalyzes the transfer of formate to 5-phospho-ribosyl-glycinamide (GAR), producing 5-phospho-ribosyl-N-formylglycinamide (FGAR). Formate is provided by PurU via hydrolysis of 10-formyl-tetrahydrofolate. In Parabacteroides distasonis (strain ATCC 8503 / DSM 20701 / CIP 104284 / JCM 5825 / NCTC 11152), this protein is Formate-dependent phosphoribosylglycinamide formyltransferase.